Here is a 141-residue protein sequence, read N- to C-terminus: 15 kDa lipoprotein (141 aa).

The N-terminal stretch at 1–17 (MVKRGRFALCLAVLLGA) is a signal peptide. Cysteine 18 carries the N-palmitoyl cysteine lipid modification. A lipid anchor (S-diacylglycerol cysteine) is attached at cysteine 18.

The protein localises to the cell membrane. This Treponema pallidum (strain Nichols) protein is 15 kDa lipoprotein (tpp15).